A 63-amino-acid chain; its full sequence is Large ribosomal subunit protein bL28 (63 aa).

This sequence belongs to the bacterial ribosomal protein bL28 family.

This is Large ribosomal subunit protein bL28 from Clostridium perfringens (strain ATCC 13124 / DSM 756 / JCM 1290 / NCIMB 6125 / NCTC 8237 / Type A).